The chain runs to 320 residues: 33 kDa chaperonin (320 aa).

The span at 1–17 (MTDASGSERLKRTKDIS) shows a compositional bias: basic and acidic residues. The tract at residues 1–27 (MTDASGSERLKRTKDISESTPPSSLPD) is disordered. Disulfide bonds link Cys262–Cys264 and Cys295–Cys298.

Belongs to the HSP33 family. Under oxidizing conditions two disulfide bonds are formed involving the reactive cysteines. Under reducing conditions zinc is bound to the reactive cysteines and the protein is inactive.

It localises to the cytoplasm. Functionally, redox regulated molecular chaperone. Protects both thermally unfolding and oxidatively damaged proteins from irreversible aggregation. Plays an important role in the bacterial defense system toward oxidative stress. In Synechococcus sp. (strain JA-3-3Ab) (Cyanobacteria bacterium Yellowstone A-Prime), this protein is 33 kDa chaperonin.